A 944-amino-acid polypeptide reads, in one-letter code: Breast cancer type 2 susceptibility protein homolog (944 aa).

Composition is skewed to basic and acidic residues over residues 325-348 (KKVKLEPSSQKEQKSSKDSNESKI) and 415-431 (NSIKRNDEEQPEKETPN). 2 disordered regions span residues 325–354 (KKVKLEPSSQKEQKSSKDSNESKIRAASCD) and 415–440 (NSIKRNDEEQPEKETPNKSRSTSSHQ). BRCA2 repeat units lie at residues 543–577 (AEPEFCGFRTASNKAIPISEKMKIKTAEFMAEFQS), 644–678 (NESQFFGFRTASNKAIEITEAMEKRGAMFLAQSRA), and 719–753 (SETEFFGFRTASNKGIVISENTKKKVAQFMSEFQA). Disordered regions lie at residues 823 to 854 (LCSQPLVRTPRRSQEIHSSLSQLAGQSPLDQA) and 876 to 944 (SSTE…RSRY). Composition is skewed to polar residues over residues 838–852 (IHSSLSQLAGQSPLD) and 876–885 (SSTETSTSCA). Over residues 904-921 (ADRDLNRSKDCAKNRQDA) the composition is skewed to basic and acidic residues. The span at 932-944 (KKSRRLGLSRSRY) shows a compositional bias: basic residues.

Interacts with Rad9 and spn-A/Rad51.

It localises to the nucleus. In terms of biological role, involved in and required for double-strand break repair by meiotic and mitotic homologous recombination. During meiosis, has a dual role in the repair of meiotic double-stranded breaks and the efficient activation of the meiotic recombination checkpoint. This Drosophila simulans (Fruit fly) protein is Breast cancer type 2 susceptibility protein homolog.